Consider the following 771-residue polypeptide: Post-GPI attachment to proteins factor 6 (771 aa).

Positions 1–34 (MGRAGTGTGGEAVAAVVAGPLLLLLLARPPPASA) are cleaved as a signal peptide. At 35–545 (GYSGKSEVGL…STAQTVAQQR (511 aa)) the chain is on the extracellular side. Residue Asn144 is glycosylated (N-linked (GlcNAc...) asparagine). A disordered region spans residues 322–343 (FNASSGLLSPSPDHQDLGRSGR). Residues 334–343 (DHQDLGRSGR) show a composition bias toward basic and acidic residues. 2 N-linked (GlcNAc...) asparagine glycosylation sites follow: Asn407 and Asn431. One can recognise an EGF-like domain in the interval 497–533 (PCLNDCGPYGQCLLLRRHSYLYASCSCKAGWRGWSCT). Disulfide bonds link Cys498/Cys508, Cys502/Cys521, and Cys523/Cys532. The chain crosses the membrane as a helical span at residues 546–566 (AATLLLTLSNLMFLAPIAVSV). Residues 567-568 (RR) lie on the Cytoplasmic side of the membrane. The helical transmembrane segment at 569–589 (FFLVEASVYAYTMFFSTFYHA) threads the bilayer. Topologically, residues 590-605 (CDQPGEAVLCILSYDT) are extracellular. The chain crosses the membrane as a helical span at residues 606-626 (LQYCDFLGSGAAIWVTILCMA). The Cytoplasmic portion of the chain corresponds to 627–629 (RLK). The chain crosses the membrane as a helical span at residues 630 to 650 (TVLKYVLFLLGTLVIAMSLQL). The Extracellular portion of the chain corresponds to 651–653 (DRR). The chain crosses the membrane as a helical span at residues 654–674 (GMWNMLGPCLFAFVIMASMWA). Residues 675–690 (YRCGHRRQCYPTSWQR) lie on the Cytoplasmic side of the membrane. A helical membrane pass occupies residues 691–711 (WAFYLLPGVSMASVGIAIYTS). Residues 712–717 (MMTSDN) lie on the Extracellular side of the membrane. The helical transmembrane segment at 718–738 (YYYTHSIWHILLAGSAALLLP) threads the bilayer. Residues 739–771 (PPDQPAEPWACSQKFPCHYQICKNDREELYAVT) lie on the Cytoplasmic side of the membrane.

The protein belongs to the TMEM8 family. In terms of processing, glycosylated. In terms of tissue distribution, expressed in pancreas, placenta, spleen, liver, kidney, bone marrow, peripheral blood leukocytes and tonsil.

The protein localises to the cell membrane. The protein resides in the lysosome membrane. It carries out the reaction a 1,2-diacyl-sn-glycero-3-phosphocholine + H2O = a 1-acyl-sn-glycero-3-phosphocholine + a fatty acid + H(+). Involved in the lipid remodeling steps of GPI-anchor maturation. Lipid remodeling steps consist in the generation of 2 saturated fatty chains at the sn-2 position of GPI-anchor proteins (GPI-AP). Has phospholipase A2 activity that removes an acyl-chain at the sn-2 position of GPI-anchors during the remodeling of GPI. Required for the shedding of the GPI-AP CRIPTO, but not CFC1, at the cell surface. Shedding of CRIPTO modulates Nodal signaling by allowing soluble CRIPTO to act as a Nodal coreceptor on other cells. Also indirectly involved in the translocation of RAC1 from the cytosol to the plasma membrane by maintaining the steady state amount of CAV1-enriched plasma membrane subdomains, stabilizing RAC1 at the plasma membrane. In contrast to myomaker (TMEM8C), has no fusogenic activity. In Homo sapiens (Human), this protein is Post-GPI attachment to proteins factor 6.